A 145-amino-acid polypeptide reads, in one-letter code: Large ribosomal subunit protein cL37 (145 aa).

The transit peptide at 1 to 63 directs the protein to the chloroplast; that stretch reads MALLCFNSFT…PRKNSIFIAS (63 aa). The interval 125–145 is disordered; the sequence is KRRLRKKGNWPPSKMKKLEGV.

This sequence belongs to the chloroplast-specific ribosomal protein cL37 family. Part of the 50S ribosomal subunit.

It is found in the plastid. The protein localises to the chloroplast. The chain is Large ribosomal subunit protein cL37 (PSRP5) from Pisum sativum (Garden pea).